Consider the following 528-residue polypeptide: Na(+)/H(+) antiporter NhaB (528 aa).

A run of 11 helical transmembrane segments spans residues 29–49 (LIIN…LLVI), 52–72 (IFTL…LLAI), 95–115 (VLLL…LLLF), 139–159 (AFLS…AVAV), 203–223 (LLMH…VGEP), 248–268 (VPVF…KIFG), 304–324 (AFIG…VGLI), 349–369 (EEAL…AVII), 390–410 (LVIF…VFVG), 448–468 (ATPN…APLI), and 476–496 (VWMA…AIEL).

This sequence belongs to the NhaB Na(+)/H(+) (TC 2.A.34) antiporter family.

The protein resides in the cell inner membrane. The enzyme catalyses 2 Na(+)(in) + 3 H(+)(out) = 2 Na(+)(out) + 3 H(+)(in). In terms of biological role, na(+)/H(+) antiporter that extrudes sodium in exchange for external protons. This is Na(+)/H(+) antiporter NhaB from Shewanella woodyi (strain ATCC 51908 / MS32).